Here is a 688-residue protein sequence, read N- to C-terminus: Elongation factor G (688 aa).

The tr-type G domain maps to 6–280 (KLFRNFGIMA…AVVDFLPSPI (275 aa)). GTP is bound by residues 15–22 (AHIDAGKT), 79–83 (DTPGH), and 133–136 (NKMD).

It belongs to the TRAFAC class translation factor GTPase superfamily. Classic translation factor GTPase family. EF-G/EF-2 subfamily.

The protein resides in the cytoplasm. In terms of biological role, catalyzes the GTP-dependent ribosomal translocation step during translation elongation. During this step, the ribosome changes from the pre-translocational (PRE) to the post-translocational (POST) state as the newly formed A-site-bound peptidyl-tRNA and P-site-bound deacylated tRNA move to the P and E sites, respectively. Catalyzes the coordinated movement of the two tRNA molecules, the mRNA and conformational changes in the ribosome. The polypeptide is Elongation factor G (Ureaplasma parvum serovar 3 (strain ATCC 27815 / 27 / NCTC 11736)).